A 172-amino-acid chain; its full sequence is Lipoprotein signal peptidase (172 aa).

The next 3 membrane-spanning stretches (helical) occupy residues 10–30 (LIWLLLSALVVGLDQWSKAWV), 68–88 (WQLWFFTALAVGISGLLAFWL), and 98–118 (SALPYALVIGGAIGNVIDRLM). Residues aspartate 124 and aspartate 142 contribute to the active site. The chain crosses the membrane as a helical span at residues 138–158 (FNIADSAIVGGAIGIAVFGLF).

It belongs to the peptidase A8 family.

It localises to the cell inner membrane. The enzyme catalyses Release of signal peptides from bacterial membrane prolipoproteins. Hydrolyzes -Xaa-Yaa-Zaa-|-(S,diacylglyceryl)Cys-, in which Xaa is hydrophobic (preferably Leu), and Yaa (Ala or Ser) and Zaa (Gly or Ala) have small, neutral side chains.. Its pathway is protein modification; lipoprotein biosynthesis (signal peptide cleavage). In terms of biological role, this protein specifically catalyzes the removal of signal peptides from prolipoproteins. In Xanthomonas axonopodis pv. citri (strain 306), this protein is Lipoprotein signal peptidase.